The following is a 746-amino-acid chain: NAD(P)H-quinone oxidoreductase subunit 5, chloroplastic (746 aa).

Helical transmembrane passes span 9 to 29 (WIIP…LLLF), 40 to 60 (WAFP…DLSI), 89 to 109 (IDSL…LVLI), 121 to 140 (YLRF…GLVT), 147 to 167 (VYIF…FWFT), 185 to 205 (GDFG…SLEF), 219 to 239 (NEVN…GSVA), 258 to 278 (TPIS…FLVA), 280 to 300 (LLPL…IGII), 327 to 347 (LGYM…FHLI), 354 to 374 (ALLF…VGYS), 396 to 416 (MSFL…CFWS), 425 to 445 (WLYS…TAFY), 552 to 572 (LFSM…GISF), 606 to 626 (FFIN…IASF), and 726 to 746 (SYIF…YLFP).

Belongs to the complex I subunit 5 family. As to quaternary structure, NDH is composed of at least 16 different subunits, 5 of which are encoded in the nucleus.

The protein resides in the plastid. It localises to the chloroplast thylakoid membrane. It carries out the reaction a plastoquinone + NADH + (n+1) H(+)(in) = a plastoquinol + NAD(+) + n H(+)(out). It catalyses the reaction a plastoquinone + NADPH + (n+1) H(+)(in) = a plastoquinol + NADP(+) + n H(+)(out). Its function is as follows. NDH shuttles electrons from NAD(P)H:plastoquinone, via FMN and iron-sulfur (Fe-S) centers, to quinones in the photosynthetic chain and possibly in a chloroplast respiratory chain. The immediate electron acceptor for the enzyme in this species is believed to be plastoquinone. Couples the redox reaction to proton translocation, and thus conserves the redox energy in a proton gradient. The polypeptide is NAD(P)H-quinone oxidoreductase subunit 5, chloroplastic (ndhF) (Vicia faba (Broad bean)).